The chain runs to 714 residues: Polyribonucleotide nucleotidyltransferase (714 aa).

Positions 487 and 493 each coordinate Mg(2+). Positions 554 to 613 constitute a KH domain; sequence PRIEVMTIPVDKIREVIGSGGKVIREIVEKTGAKINIEDDGTIKIASASGKEIEAARKWI. Residues 623-691 form the S1 motif domain; the sequence is GVVYEGTVVK…ERGKVRLSMK (69 aa).

It belongs to the polyribonucleotide nucleotidyltransferase family. Requires Mg(2+) as cofactor.

The protein localises to the cytoplasm. It catalyses the reaction RNA(n+1) + phosphate = RNA(n) + a ribonucleoside 5'-diphosphate. In terms of biological role, involved in mRNA degradation. Catalyzes the phosphorolysis of single-stranded polyribonucleotides processively in the 3'- to 5'-direction. The polypeptide is Polyribonucleotide nucleotidyltransferase (Allorhizobium ampelinum (strain ATCC BAA-846 / DSM 112012 / S4) (Agrobacterium vitis (strain S4))).